The sequence spans 845 residues: U-box domain-containing protein 52 (845 aa).

2 disordered regions span residues 180–210 and 229–258; these read RPSESDASGSIRFERSSSTSGSTDSPRLPPE and SPALKHSMGSNAVAQMDTSSSGTDQEEVST. A compositionally biased stretch (low complexity) spans 187-204; it reads SGSIRFERSSSTSGSTDS. Residues 236–251 show a composition bias toward polar residues; sequence MGSNAVAQMDTSSSGT. A coiled-coil region spans residues 351-468; the sequence is SITDNQVNLN…REKDKLQASL (118 aa). Residues 490–754 enclose the Protein kinase domain; that stretch reads FAENLKIGIG…DLKDQIIPAL (265 aa). ATP contacts are provided by residues 496–504 and Lys517; that span reads IGIGAYGSV. Residue Asp612 is the Proton acceptor of the active site. A U-box domain is found at 774–845; the sequence is GPPSHFICPL…AIMEWKSNKR (72 aa).

This sequence belongs to the protein kinase superfamily. Ser/Thr protein kinase family.

It catalyses the reaction L-seryl-[protein] + ATP = O-phospho-L-seryl-[protein] + ADP + H(+). It carries out the reaction L-threonyl-[protein] + ATP = O-phospho-L-threonyl-[protein] + ADP + H(+). The catalysed reaction is S-ubiquitinyl-[E2 ubiquitin-conjugating enzyme]-L-cysteine + [acceptor protein]-L-lysine = [E2 ubiquitin-conjugating enzyme]-L-cysteine + N(6)-ubiquitinyl-[acceptor protein]-L-lysine.. It functions in the pathway protein modification; protein ubiquitination. Functionally, functions as an E3 ubiquitin ligase. The protein is U-box domain-containing protein 52 (PUB52) of Arabidopsis thaliana (Mouse-ear cress).